The chain runs to 490 residues: Dual specificity protein kinase CLK3 (490 aa).

A disordered region spans residues 1 to 138 (MHHCKRYRSP…SKRSSRSVED (138 aa)). Position 7 is a phosphotyrosine (Tyr7). Ser9, Ser49, Ser51, Ser67, Ser76, and Ser78 each carry phosphoserine. Basic and acidic residues-rich tracts occupy residues 26 to 56 (YSRE…DRLP) and 63 to 76 (ERRD…EERS). Residues 88–116 (RSRHRRRSRERGPYRTRKHAHHCHKRRTR) are compositionally biased toward basic residues. Over residues 117-130 (SCSSASSRSQQSSK) the composition is skewed to low complexity. Position 135 is a phosphoserine (Ser135). The region spanning 156–472 (YEIVGNLGEG…LAEALLHPFF (317 aa)) is the Protein kinase domain. Residues 162 to 170 (LGEGTFGKV) and Lys186 each bind ATP. Asp283 functions as the Proton acceptor in the catalytic mechanism.

The protein belongs to the protein kinase superfamily. CMGC Ser/Thr protein kinase family. Lammer subfamily. Autophosphorylates on all three types of residues. In terms of tissue distribution, endothelial cells.

The protein localises to the nucleus. The protein resides in the cytoplasm. It localises to the cytoplasmic vesicle. Its subcellular location is the secretory vesicle. It is found in the acrosome. The protein localises to the nucleus speckle. The catalysed reaction is L-seryl-[protein] + ATP = O-phospho-L-seryl-[protein] + ADP + H(+). It catalyses the reaction L-threonyl-[protein] + ATP = O-phospho-L-threonyl-[protein] + ADP + H(+). The enzyme catalyses L-tyrosyl-[protein] + ATP = O-phospho-L-tyrosyl-[protein] + ADP + H(+). Leucettine L41 inhibits its kinase activity and affects the regulation of alternative splicing mediated by phosphorylation of SR proteins. Functionally, dual specificity kinase acting on both serine/threonine and tyrosine-containing substrates. Phosphorylates serine- and arginine-rich (SR) proteins of the spliceosomal complex. May be a constituent of a network of regulatory mechanisms that enable SR proteins to control RNA splicing and can cause redistribution of SR proteins from speckles to a diffuse nucleoplasmic distribution. Phosphorylates SRSF1 and SRSF3. Regulates the alternative splicing of tissue factor (F3) pre-mRNA in endothelial cells. This chain is Dual specificity protein kinase CLK3, found in Homo sapiens (Human).